The following is a 418-amino-acid chain: MHIFDELKDRGLIFQTTDEEALRKALEEGQVSYYTGYDPTADSLHLGHLVAILTSRRLQLAGHKPYALVGGATGLIGDPSFKDAERSLQTKDTVDGWVKSIQGQLSRFLDFENGENKAVMVNNYDWFGSISFIDFLRDIGKYFTVNYMMSKESVKKRIETGISYTEFAYQIMQGYDFFVLNQDHNVTLQIGGSDQWGNMTAGTELLRRKADKTGHVITVPLITDATGKKFGKSEGNAVWLNPEKTSPYEMYQFWMNVMDADAVRFLKIFTFLSLDEIEDIRKQFEAAPHERLAQKVLAREVVTLVHGEEAYKEALNITEQLFAGNIKNLSVKELKQGLRGVPNYQVQADEHNNIVELLVSSGIVNSKRQAREDVQNGAIYVNGDRIQDLDYVLSDADKLENELTVIRRGKKKYFVLTY.

Y34 contributes to the L-tyrosine binding site. The 'HIGH' region motif lies at P39–H48. Residues Y169 and Q173 each coordinate L-tyrosine. The short motif at K229–S233 is the 'KMSKS' region element. K232 is a binding site for ATP. The 67-residue stretch at N352 to Y418 folds into the S4 RNA-binding domain.

The protein belongs to the class-I aminoacyl-tRNA synthetase family. TyrS type 1 subfamily. Homodimer.

The protein resides in the cytoplasm. It carries out the reaction tRNA(Tyr) + L-tyrosine + ATP = L-tyrosyl-tRNA(Tyr) + AMP + diphosphate + H(+). Catalyzes the attachment of tyrosine to tRNA(Tyr) in a two-step reaction: tyrosine is first activated by ATP to form Tyr-AMP and then transferred to the acceptor end of tRNA(Tyr). This Streptococcus pneumoniae (strain 70585) protein is Tyrosine--tRNA ligase.